Consider the following 220-residue polypeptide: Cytidylate kinase (220 aa).

11–19 is an ATP binding site; that stretch reads GPTASGKGT.

Belongs to the cytidylate kinase family. Type 1 subfamily.

It localises to the cytoplasm. It catalyses the reaction CMP + ATP = CDP + ADP. The catalysed reaction is dCMP + ATP = dCDP + ADP. The chain is Cytidylate kinase from Polynucleobacter asymbioticus (strain DSM 18221 / CIP 109841 / QLW-P1DMWA-1) (Polynucleobacter necessarius subsp. asymbioticus).